The primary structure comprises 81 residues: Mipartoxin-2 (81 aa).

The N-terminal stretch at 1-21 (MKTLLLTLVVVTIVCLDLGNS) is a signal peptide. Intrachain disulfides connect Cys24/Cys42, Cys35/Cys61, Cys65/Cys73, and Cys74/Cys79.

Belongs to the three-finger toxin family. Short-chain subfamily. Expressed by the venom gland.

It localises to the secreted. Its function is as follows. Snake venom neurotoxin that blocks neuromuscular transmission, presenting a postsynaptic action through the nicotinic acetylcholine receptor (nAChR). Has no cytotoxic activity. This Micrurus mipartitus (Red-tailed coral snake) protein is Mipartoxin-2.